The sequence spans 271 residues: Magnetosome protein MamX (271 aa).

The Cytoplasmic portion of the chain corresponds to 1–10; sequence MSSKAVAHPN. The chain crosses the membrane as a helical span at residues 11 to 31; sequence IAVWIMALGIAFSMALVLTAV. The Lumenal portion of the chain corresponds to 32–271; that stretch reads FNANPWEDHT…NAGGMDAEER (240 aa). Positions 48–71 match the MCR (magnetochrome) 1 motif; that stretch reads IVAGMPAPHRDGREKMVCSSCHIV. 6 residues coordinate heme: Cys65, Cys68, His69, Cys104, Cys107, and His108. An MCR 2 motif is present at residues 87 to 110; it reads IVQGTPAPHVDGREKMPCASCHTI.

This sequence belongs to the magnetosome MamX family. Heme serves as cofactor.

The protein resides in the magnetosome membrane. Functionally, required for correct biomineralization of the magnetosome, may be involved in redox control of biomineralization. May function with MamY, MamZ amd Mms6. In Paramagnetospirillum magneticum (strain ATCC 700264 / AMB-1) (Magnetospirillum magneticum), this protein is Magnetosome protein MamX (mamX).